A 549-amino-acid polypeptide reads, in one-letter code: MAKDVKFGIDARKQMMDGVNVLANAVRVTLGPKGRNVVIDKSFGAPTITKDGVSVAKEIELENKFENMGAQLVREVASRTNDVAGDGTTTATVLAQSILQEGMKSVAAGMNPMDLKRGIDKAVRAAVEQIHLLSTPADDSKAIAQVGSISANSDTKIGELIAQAMEKVGKQGVITVEEGSSFEDTLEVVEGMQFDRGYISPYFANKQDSLTAEFENPYILLVDKKISNIREIVPLLEQVMQQSKPLLIIAEDVENEALATLVVNNMRGGLKTCAVKAPGFGDRRKAMLEDIATLTGGTVISEEIGLSLETATLEQLGTAKKVTVGKENTVIVDGAGNSADIENRVESIKRQVEESTSDYDKEKLQERMAKLAGGVAVIKVGAATETEMKEKKDRVDDALHATRAAVEEGVVPGGGVALVRAMNALSELRGDNDDQNAGINILRRAMEAPLRQIVTNSGEEASVVVNEVKSGTGNYGYNAASGEYGDMLEMGILDPAKVARSALENAASVAGLMLTTEVMITDLPQGDDGMAGMGGAGGMGGMGGMGGMM.

Residues 29-32, K50, 86-90, G414, 478-480, and D494 each bind ATP; these read TLGP, DGTTT, and NAA.

This sequence belongs to the chaperonin (HSP60) family. Forms a cylinder of 14 subunits composed of two heptameric rings stacked back-to-back. Interacts with the co-chaperonin GroES.

Its subcellular location is the cytoplasm. It catalyses the reaction ATP + H2O + a folded polypeptide = ADP + phosphate + an unfolded polypeptide.. Its function is as follows. Together with its co-chaperonin GroES, plays an essential role in assisting protein folding. The GroEL-GroES system forms a nano-cage that allows encapsulation of the non-native substrate proteins and provides a physical environment optimized to promote and accelerate protein folding. The chain is Chaperonin GroEL from Psychrobacter cryohalolentis (strain ATCC BAA-1226 / DSM 17306 / VKM B-2378 / K5).